Reading from the N-terminus, the 332-residue chain is Nuclear hormone receptor family member nhr-9 (332 aa).

Positions 11 to 85 form a DNA-binding region, nuclear receptor; it reads ERRCAICSKL…MGMRIVTNQY (75 aa). NR C4-type zinc fingers lie at residues 14–34 and 50–73; these read CAIC…CNAC and CINN…YNKC. In terms of domain architecture, NR LBD spans 101–332; that stretch reads DRSNKLMNFQ…KRLCAELLGA (232 aa).

It belongs to the nuclear hormone receptor family.

It is found in the nucleus. Its function is as follows. Orphan nuclear receptor. The sequence is that of Nuclear hormone receptor family member nhr-9 (nhr-9) from Caenorhabditis elegans.